Here is an 83-residue protein sequence, read N- to C-terminus: MNFIQIAVLFVLVAVALARPQEDPANLPAPEAAAAPPAAAAAPPAAAAAPPAPPAPPAAAPQAAPAGGSGRKKNVNHNVITIG.

Positions 1–18 are cleaved as a signal peptide; the sequence is MNFIQIAVLFVLVAVALA. Positions 23–83 are disordered; it reads DPANLPAPEA…NVNHNVITIG (61 aa). Over residues 28-49 the composition is skewed to low complexity; that stretch reads PAPEAAAAPPAAAAAPPAAAAA. Over residues 50–59 the composition is skewed to pro residues; that stretch reads PPAPPAPPAA.

In terms of tissue distribution, adult male abdomen.

Functionally, may be a male specific regulatory factor. In Drosophila melanogaster (Fruit fly), this protein is Male-specific opa-containing protein (msopa).